An 896-amino-acid chain; its full sequence is Alanine--tRNA ligase (896 aa).

His-580, His-584, Cys-683, and His-687 together coordinate Zn(2+).

Belongs to the class-II aminoacyl-tRNA synthetase family. The cofactor is Zn(2+).

The protein localises to the cytoplasm. It carries out the reaction tRNA(Ala) + L-alanine + ATP = L-alanyl-tRNA(Ala) + AMP + diphosphate. In terms of biological role, catalyzes the attachment of alanine to tRNA(Ala) in a two-step reaction: alanine is first activated by ATP to form Ala-AMP and then transferred to the acceptor end of tRNA(Ala). Also edits incorrectly charged Ser-tRNA(Ala) and Gly-tRNA(Ala) via its editing domain. This chain is Alanine--tRNA ligase, found in Mycolicibacterium smegmatis (strain ATCC 700084 / mc(2)155) (Mycobacterium smegmatis).